The chain runs to 498 residues: Probable lysophospholipase BODYGUARD 3 (498 aa).

A signal peptide spans Met1–Tyr55. Residue Cys56 is the site of N-palmitoyl cysteine attachment. Residues Val220–Pro326 enclose the AB hydrolase-1 domain. His224 is a catalytic residue. Ser297 serves as the catalytic Nucleophile. Residues Asp446 and His474 each act as charge relay system in the active site.

It localises to the cell membrane. The protein resides in the secreted. It is found in the cell wall. Involved in cuticle development and morphogenesis. In Arabidopsis thaliana (Mouse-ear cress), this protein is Probable lysophospholipase BODYGUARD 3.